We begin with the raw amino-acid sequence, 588 residues long: L-fucose isomerase (588 aa).

Catalysis depends on proton acceptor residues Glu335 and Asp359. Mn(2+) is bound by residues Glu335, Asp359, and His525.

This sequence belongs to the L-fucose isomerase family. The cofactor is Mn(2+).

Its subcellular location is the cytoplasm. It catalyses the reaction L-fucose = L-fuculose. It functions in the pathway carbohydrate degradation; L-fucose degradation; L-lactaldehyde and glycerone phosphate from L-fucose: step 1/3. Its function is as follows. Converts the aldose L-fucose into the corresponding ketose L-fuculose. The sequence is that of L-fucose isomerase from Streptococcus pneumoniae serotype 2 (strain D39 / NCTC 7466).